We begin with the raw amino-acid sequence, 280 residues long: MAIRKYKPTTPGRRQSSVSGFDELTRSTPEKSLLRPLHKTGGRNVHGHITTRHKGGGHKRQYRLIDFRRNDKDGVPAKVAHIEYDPNRTANIALLHYFDGEKRYIIAPRNLKQGTVVESGANADIKVGNNLPLRNIPTGTTIHAVELKPGGGAKLARSAGSSIQLLGKEGKYAILRMPSTEIRRVDARCRATVGEVGNADQINIRWGKAGRMRWKGVRPTVRGVVMNPVDHPHGGGEGKSSGGRHPVSPWGQPEGRTRKPNRPSDGLIVRRRRSNKNKKR.

Disordered stretches follow at residues 1-59 (MAIR…GGHK) and 223-280 (GVVM…NKKR). Residues 23-33 (ELTRSTPEKSL) are compositionally biased toward basic and acidic residues. 2 stretches are compositionally biased toward basic residues: residues 36-59 (PLHKTGGRNVHGHITTRHKGGGHK) and 269-280 (VRRRRSNKNKKR).

Belongs to the universal ribosomal protein uL2 family. As to quaternary structure, part of the 50S ribosomal subunit. Forms a bridge to the 30S subunit in the 70S ribosome.

Its function is as follows. One of the primary rRNA binding proteins. Required for association of the 30S and 50S subunits to form the 70S ribosome, for tRNA binding and peptide bond formation. It has been suggested to have peptidyltransferase activity; this is somewhat controversial. Makes several contacts with the 16S rRNA in the 70S ribosome. The polypeptide is Large ribosomal subunit protein uL2 (Corynebacterium kroppenstedtii (strain DSM 44385 / JCM 11950 / CIP 105744 / CCUG 35717)).